Here is a 559-residue protein sequence, read N- to C-terminus: Dihydroxy-acid dehydratase (559 aa).

Cys-49 provides a ligand contact to [2Fe-2S] cluster. A Mg(2+)-binding site is contributed by Asp-81. Position 122 (Cys-122) interacts with [2Fe-2S] cluster. Mg(2+) is bound by residues Asp-123 and Lys-124. Lys-124 carries the N6-carboxylysine modification. Cys-194 is a [2Fe-2S] cluster binding site. Position 446 (Glu-446) interacts with Mg(2+). Ser-472 (proton acceptor) is an active-site residue.

Belongs to the IlvD/Edd family. Homodimer. Requires [2Fe-2S] cluster as cofactor. Mg(2+) serves as cofactor.

The catalysed reaction is (2R)-2,3-dihydroxy-3-methylbutanoate = 3-methyl-2-oxobutanoate + H2O. It carries out the reaction (2R,3R)-2,3-dihydroxy-3-methylpentanoate = (S)-3-methyl-2-oxopentanoate + H2O. The protein operates within amino-acid biosynthesis; L-isoleucine biosynthesis; L-isoleucine from 2-oxobutanoate: step 3/4. It participates in amino-acid biosynthesis; L-valine biosynthesis; L-valine from pyruvate: step 3/4. Its function is as follows. Functions in the biosynthesis of branched-chain amino acids. Catalyzes the dehydration of (2R,3R)-2,3-dihydroxy-3-methylpentanoate (2,3-dihydroxy-3-methylvalerate) into 2-oxo-3-methylpentanoate (2-oxo-3-methylvalerate) and of (2R)-2,3-dihydroxy-3-methylbutanoate (2,3-dihydroxyisovalerate) into 2-oxo-3-methylbutanoate (2-oxoisovalerate), the penultimate precursor to L-isoleucine and L-valine, respectively. In Prochlorococcus marinus subsp. pastoris (strain CCMP1986 / NIES-2087 / MED4), this protein is Dihydroxy-acid dehydratase.